The chain runs to 74 residues: Conotoxin VnMEKL-0221 (74 aa).

The signal sequence occupies residues 1–19 (MEKLTILLLVAAVLMWTQA). The propeptide occupies 20–46 (LIQEKRPKEKIKFLSKRKTTAESWWEG). 3 cysteine pairs are disulfide-bonded: Cys48–Cys62, Cys55–Cys66, and Cys61–Cys71.

This sequence belongs to the conotoxin O2 superfamily. As to expression, expressed by the venom duct.

Its subcellular location is the secreted. The protein is Conotoxin VnMEKL-0221 of Conus ventricosus (Mediterranean cone).